We begin with the raw amino-acid sequence, 100 residues long: MANAIDTRHYDVIVAPHITEKATLLSENNAVVFKVADKATKPEIKAAVEALFNVKVTKVNTLTQKGKTKRWKGKPYKRTDVKKAVVTLAAGQSIDVTSGI.

Belongs to the universal ribosomal protein uL23 family. In terms of assembly, part of the 50S ribosomal subunit. Contacts protein L29, and trigger factor when it is bound to the ribosome.

Functionally, one of the early assembly proteins it binds 23S rRNA. One of the proteins that surrounds the polypeptide exit tunnel on the outside of the ribosome. Forms the main docking site for trigger factor binding to the ribosome. The polypeptide is Large ribosomal subunit protein uL23 (Novosphingobium aromaticivorans (strain ATCC 700278 / DSM 12444 / CCUG 56034 / CIP 105152 / NBRC 16084 / F199)).